Consider the following 291-residue polypeptide: tRNA pseudouridine synthase-like 1 (291 aa).

The active-site Nucleophile is Asp66. Tyr130 contributes to the substrate binding site.

This sequence belongs to the tRNA pseudouridine synthase TruA family.

The catalysed reaction is a uridine in tRNA = a pseudouridine in tRNA. The protein is tRNA pseudouridine synthase-like 1 (Pusl1) of Mus musculus (Mouse).